The following is a 282-amino-acid chain: Cyclic AMP-dependent transcription factor ATF-5 (282 aa).

The segment at 1–21 (MSLLATLGLELDRALLPASGL) is required for protein stabilization induced by IL1B. Lys29 carries the post-translational modification N6-acetyllysine; by EP300. Disordered stretches follow at residues 116–152 (FLDA…DLPQ) and 173–238 (EEVG…ALEG). The tract at residues 119 to 217 (APPLPPPSPP…GDRKQKKRDQ (99 aa)) is interaction with PTP4A1. Pro residues predominate over residues 120 to 140 (PPLPPPSPPPLPPPPLPPAPS). A compositionally biased stretch (low complexity) spans 141–150 (LPLSLPSFDL). The span at 178 to 194 (PPLPPPQQPPPPSPPQP) shows a compositional bias: pro residues. The bZIP domain maps to 208–271 (GDRKQKKRDQ…QYVKDLLIEV (64 aa)). Residues 210-230 (RKQKKRDQNKSAALRYRQRKR) form a basic motif region. The interval 236–250 (LEGECQGLEARNREL) is leucine-zipper. At Ser256 the chain carries Phosphoserine.

It belongs to the bZIP family. In terms of assembly, binds DNA as a dimer. Interacts with PTP4A1/PRL-1. Interacts with CCND3, but not with CCND1 or CCND2. Interacts with HSPA1A or HSPA1B; the interaction protects ATF5 from degradation via proteasome-dependent and caspase-dependent processes. Interacts (via C-terminal region) with NPM1 (via C-terminal region); the interaction leads to loss of association between HSPA1A or HSPA1B and ATF5 and promotes ATF5 degradation via proteasome-dependent and caspase-dependent processes. Interacts with NLK; the interaction stabilizes ATF5 at the protein level in a kinase-independent manner. Interacts with alpha-tubulin, gamma-tubulin members TUBGCP2 and TUBGCP4, PCNT; the ATF5:PCNT:polyglutamylated tubulin (PGT) tripartite unites the mother centriole and the pericentriolar material (PCM) in the centrosome. Interacts with CEBPB and EP300; EP300 is required for ATF5 and CEBPB interaction and DNA binding. Post-translationally, ubiquitinated by CDC34 and UBE2B in order to be degraded by the proteasome. Cisplatin inhibits ubiquitination and proteasome-mediated degradation by inhibiting the interaction with CDC34. Ubiquitination and degradation by the proteasome are inhibited by NLK in a kinase-independent manner. In terms of processing, phosphorylated by NLK, probably at Ser-92, Thr-94, Ser-126 and Ser-190. Acetylated at Lys-29 by EP300, the acetylation enhances the interaction with CEBPB, DNA-binding and transactivation activity. In terms of tissue distribution, widely expressed with higher expression levels in liver.

It is found in the cytoplasm. Its subcellular location is the nucleus. The protein localises to the cytoskeleton. The protein resides in the microtubule organizing center. It localises to the centrosome. Functionally, transcription factor that either stimulates or represses gene transcription through binding of different DNA regulatory elements such as cAMP response element (CRE) (consensus: 5'-GTGACGT[AC][AG]-3'), ATF5-specific response element (ARE) (consensus: 5'-C[CT]TCT[CT]CCTT[AT]-3') but also the amino acid response element (AARE), present in many viral and cellular promoters. Critically involved, often in a cell type-dependent manner, in cell survival, proliferation, and differentiation. Its transcriptional activity is enhanced by CCND3 and slightly inhibited by CDK4. Important regulator of the cerebral cortex formation, functions in cerebral cortical neuroprogenitor cells to maintain proliferation and to block differentiation into neurons. Must be down-regulated in order for such cells to exit the cycle and differentiate. Participates in the pathways by which SHH promotes cerebellar granule neuron progenitor cells proliferation. Critical for survival of mature olfactory sensory neurons (OSN), directs expression of OSN-specific genes. May be involved in osteogenic differentiation. Promotes cell proliferation and survival by inducing the expression of EGR1 sinergistically with ELK1. Once acetylated by EP300, binds to ARE sequences on target genes promoters, such as BCL2 and EGR1. Plays an anti-apoptotic role through the transcriptional regulation of BCL2, this function seems to be cell type-dependent. Cooperates with NR1I3/CAR in the transcriptional activation of CYP2B6 in liver. In hepatic cells, represses CRE-dependent transcription and inhibits proliferation by blocking at G2/M phase. May act as a negative regulator of IL1B transduction pathway in liver. Upon IL1B stimulus, cooperates with NLK to activate the transactivation activity of C/EBP subfamily members. Besides its function of transcription factor, acts as a cofactor of CEBPB to activate CEBPA and promote adipocyte differentiation. Regulates centrosome dynamics in a cell-cycle- and centriole-age-dependent manner. Forms 9-foci symmetrical ring scaffold around the mother centriole to control centrosome function and the interaction between centrioles and pericentriolar material. The protein is Cyclic AMP-dependent transcription factor ATF-5 (ATF5) of Homo sapiens (Human).